Reading from the N-terminus, the 745-residue chain is Elongation factor G, mitochondrial (745 aa).

The 278-residue stretch at 40–317 (ERIRNIGISA…AVLDYLPNPG (278 aa)) folds into the tr-type G domain. GTP-binding positions include 49–56 (AHIDSGKT), 116–120 (DTPGH), and 170–173 (NKLD).

This sequence belongs to the TRAFAC class translation factor GTPase superfamily. Classic translation factor GTPase family. EF-G/EF-2 subfamily.

Its subcellular location is the mitochondrion. Its pathway is protein biosynthesis; polypeptide chain elongation. Mitochondrial GTPase that catalyzes the GTP-dependent ribosomal translocation step during translation elongation. During this step, the ribosome changes from the pre-translocational (PRE) to the post-translocational (POST) state as the newly formed A-site-bound peptidyl-tRNA and P-site-bound deacylated tRNA move to the P and E sites, respectively. Catalyzes the coordinated movement of the two tRNA molecules, the mRNA and conformational changes in the ribosome. Essential during development as it acts as a retrograde signal from mitochondria to the nucleus to slow down cell proliferation if mitochondrial energy output is low. The protein is Elongation factor G, mitochondrial of Drosophila melanogaster (Fruit fly).